We begin with the raw amino-acid sequence, 352 residues long: Sulfate-binding protein (352 aa).

Positions M1 to Q40 are cleaved as a signal peptide.

It belongs to the prokaryotic sulfate-binding protein family.

The protein resides in the periplasm. In terms of biological role, this protein specifically binds sulfate and is involved in its transmembrane transport. The sequence is that of Sulfate-binding protein (sbpA) from Synechocystis sp. (strain ATCC 27184 / PCC 6803 / Kazusa).